Reading from the N-terminus, the 392-residue chain is Cytochrome b (392 aa).

4 helical membrane passes run 38–58 (FGSL…FLAM), 82–104 (WLLR…LHIF), 119–139 (VRCL…TGYV), and 185–205 (FFSL…LHLA). 2 residues coordinate heme b: H88 and H102. Heme b contacts are provided by H189 and H203. H208 is an a ubiquinone binding site. Transmembrane regions (helical) follow at residues 231 to 251 (FYVK…IWIF), 295 to 315 (SGGV…PFFK), 327 to 347 (IHQG…WIGC), and 354 to 373 (FVTI…AITP).

Belongs to the cytochrome b family. The main subunits of complex b-c1 are: cytochrome b, cytochrome c1 and the Rieske protein. Requires heme b as cofactor.

It is found in the mitochondrion inner membrane. Its function is as follows. Component of the ubiquinol-cytochrome c reductase complex (complex III or cytochrome b-c1 complex) that is part of the mitochondrial respiratory chain. The b-c1 complex mediates electron transfer from ubiquinol to cytochrome c. Contributes to the generation of a proton gradient across the mitochondrial membrane that is then used for ATP synthesis. This is Cytochrome b (MT-CYB) from Pisum sativum (Garden pea).